The primary structure comprises 2265 residues: Collagen alpha-6(VI) chain (2265 aa).

The signal sequence occupies residues 1–18 (MLLVLCLTMICFHVCVNQ). The nonhelical region stretch occupies residues 19-1390 (DSGPEYADVV…TCCCLLCKCT (1372 aa)). 7 VWFA domains span residues 26–205 (DVVF…IKDV), 228–406 (DVVF…LKKL), 435–605 (DIYL…RNQV), 621–790 (DIMF…EDDL), 808–981 (DVVF…FSDV), 999–1170 (DLVF…KKRI), and 1186–1378 (DVVV…INVA). Residues Asn197, Asn238, and Asn346 are each glycosylated (N-linked (GlcNAc...) asparagine). N-linked (GlcNAc...) asparagine glycosylation occurs at Asn760. The tract at residues 1391–1724 (GGDGAMGDPG…GRKGVKGARG (334 aa)) is triple-helical region. Positions 1398–1722 (DPGSAGKKGP…PPGRKGVKGA (325 aa)) are disordered. The segment covering 1455–1470 (EEGEVGEDGLDGLDGE) has biased composition (acidic residues). The span at 1497–1507 (AAGDRGAKGLR) shows a compositional bias: basic and acidic residues. Residues 1507-1509 (RGD) carry the Cell attachment site motif. The span at 1546–1558 (SRRKMVVHGRRGH) shows a compositional bias: basic residues. Residues 1725–2265 (LASFSTCDLI…ATSKLGKRSA (541 aa)) form a nonhelical region region. 2 VWFA domains span residues 1756-1936 (ELVF…ERLQ) and 1964-2165 (DTAF…INSI). Positions 2186–2205 (SRDLKPPPRQFRSFVPGPQK) are disordered.

This sequence belongs to the type VI collagen family. In terms of assembly, trimers composed of three different chains: alpha-1(VI), alpha-2(VI), and alpha-3(VI) or alpha-4(VI) or alpha-5(VI) or alpha-6(VI). Prolines at the third position of the tripeptide repeating unit (G-X-Y) are hydroxylated in some or all of the chains. In terms of tissue distribution, in newborn, it is expressed in lung, heart, kidney, muscle, brain, intestine, skin, femur and sternum. In adult, it is expressed in lung, heart, muscle, ovary, brain, liver and sternum.

It localises to the secreted. Its subcellular location is the extracellular space. It is found in the extracellular matrix. Functionally, collagen VI acts as a cell-binding protein. The polypeptide is Collagen alpha-6(VI) chain (Col6a6) (Mus musculus (Mouse)).